The chain runs to 338 residues: Putative transposase for insertion sequence element IS4SA (338 aa).

Belongs to the transposase 11 family.

This Synechocystis sp. (strain ATCC 27184 / PCC 6803 / Kazusa) protein is Putative transposase for insertion sequence element IS4SA.